The sequence spans 121 residues: UPF0102 protein Strop_1320 (121 aa).

The protein belongs to the UPF0102 family.

The polypeptide is UPF0102 protein Strop_1320 (Salinispora tropica (strain ATCC BAA-916 / DSM 44818 / JCM 13857 / NBRC 105044 / CNB-440)).